A 701-amino-acid chain; its full sequence is Ubiquitin thioesterase zranb1 (701 aa).

A RanBP2-type 1 zinc finger spans residues 3 to 33 (EHGIKWACEYCTYENWPSAIKCTMCRAPRPS). The Zn(2+) site is built by C10, C13, C24, and C27. The segment at 38 to 59 (TEEPFKNSTPDVGSMERESGSP) is disordered. A RanBP2-type 2 zinc finger spans residues 79–108 (TSTKWSCHMCTYLNWPRAIRCTQCLSQRRT). C85, C88, C99, and C102 together coordinate Zn(2+). The segment at 108 to 129 (TRSPTESPQSSGSSLRAIPSPI) is disordered. Residues 111 to 121 (PTESPQSSGSS) show a composition bias toward low complexity. The RanBP2-type 3 zinc-finger motif lies at 143–173 (IKGQHWTCSACTYENCAKAKKCVVCDHPTPN). Positions 150, 153, 164, and 167 each coordinate Zn(2+). The interval 198–220 (WRGGCSSSNSQRRSPPTSKRDSD) is disordered. Positions 202 to 214 (CSSSNSQRRSPPT) are enriched in polar residues. ANK repeat units follow at residues 253–283 (RKTD…SGGD) and 306–333 (YTLV…QHAA). Residues 425–585 (LYALWNRTAG…RGHFSALVAM (161 aa)) form the OTU domain. The active-site Nucleophile is the C436. H578 (proton acceptor) is an active-site residue.

This sequence belongs to the peptidase C64 family.

It localises to the cytoplasm. The protein resides in the nucleus. The enzyme catalyses Thiol-dependent hydrolysis of ester, thioester, amide, peptide and isopeptide bonds formed by the C-terminal Gly of ubiquitin (a 76-residue protein attached to proteins as an intracellular targeting signal).. Ubiquitin thioesterase, which specifically hydrolyzes 'Lys-29'-linked and 'Lys-33'-linked diubiquitin. Also cleaves 'Lys-63'-linked chains, but with 40-fold less efficiency compared to 'Lys-29'-linked ones. Positive regulator of the Wnt signaling pathway that deubiquitinates apc protein, a negative regulator of Wnt-mediated transcription. Acts as a regulator of autophagy by mediating deubiquitination of pik3c3/vps34, thereby promoting autophagosome maturation. Plays a role in the regulation of cell morphology and cytoskeletal organization. Required in the stress fiber dynamics and cell migration. The protein is Ubiquitin thioesterase zranb1 (zranb1) of Xenopus tropicalis (Western clawed frog).